The chain runs to 347 residues: Indole-3-glycerol phosphate lyase, chloroplastic (347 aa).

2 disordered regions span residues 1-38 and 64-89; these read MAFA…TPRR and APPQ…RSRP. The transit peptide at 1–53 directs the protein to the chloroplast; the sequence is MAFAPKTSSSSSLSSALQAAQSPPLLLRRMSSTATPRRRYDAAVVVTTTTTAR. The segment covering 8–27 has biased composition (low complexity); the sequence is SSSSSLSSALQAAQSPPLLL. Residues 64-76 are compositionally biased toward pro residues; sequence APPQAPAPAPVPP.

It belongs to the TrpA family. Tetramer of two alpha and two beta chains for the tryptophan synthase activity. Homodimer of alpha chains for the indole-3-glycerol phosphate lyase activity.

Its subcellular location is the plastid. The protein resides in the chloroplast. The catalysed reaction is (1S,2R)-1-C-(indol-3-yl)glycerol 3-phosphate = indole + D-glyceraldehyde 3-phosphate. The enzyme catalyses (1S,2R)-1-C-(indol-3-yl)glycerol 3-phosphate + L-serine = D-glyceraldehyde 3-phosphate + L-tryptophan + H2O. It functions in the pathway secondary metabolite biosynthesis; 2,4-dihydroxy-1,4-benzoxazin-3-one biosynthesis; 2,4-dihydroxy-1,4-benzoxazin-3-one from indoleglycerol phosphate: step 1/5. It participates in amino-acid biosynthesis; L-tryptophan biosynthesis; L-tryptophan from chorismate: step 5/5. Its function is as follows. The alpha subunit is responsible for the aldol cleavage of indoleglycerol phosphate to indole and glyceraldehyde 3-phosphate. In bacteria, tryptophan synthase alpha (TSA) activity is almost completely dependent on formation of an active alpha2beta2 complex with tryptophan synthase beta (TSB), and indole is usually not released during tryptophan synthesis. In maize, the TSA homolog BX1 catalyzes the formation of free indole from indole-3-glycerol phosphate, independently of TSB. This chain is Indole-3-glycerol phosphate lyase, chloroplastic (BX1), found in Zea mays (Maize).